The sequence spans 437 residues: Ribosomal protein uS12 methylthiotransferase RimO (437 aa).

The 116-residue stretch at 9 to 124 folds into the MTTase N-terminal domain; it reads TKVNIVTLGC…LPAILKKFRA (116 aa). Positions 18, 56, 90, 151, 155, and 158 each coordinate [4Fe-4S] cluster. Residues 137-367 enclose the Radical SAM core domain; that stretch reads TTPSHYAYVK…MSIQEGISAE (231 aa). In terms of domain architecture, TRAM spans 370 to 437; it reads EKKIGNTYKV…EFDLFGEIVK (68 aa).

The protein belongs to the methylthiotransferase family. RimO subfamily. [4Fe-4S] cluster serves as cofactor.

It localises to the cytoplasm. The catalysed reaction is L-aspartate(89)-[ribosomal protein uS12]-hydrogen + (sulfur carrier)-SH + AH2 + 2 S-adenosyl-L-methionine = 3-methylsulfanyl-L-aspartate(89)-[ribosomal protein uS12]-hydrogen + (sulfur carrier)-H + 5'-deoxyadenosine + L-methionine + A + S-adenosyl-L-homocysteine + 2 H(+). Catalyzes the methylthiolation of an aspartic acid residue of ribosomal protein uS12. In Cytophaga hutchinsonii (strain ATCC 33406 / DSM 1761 / CIP 103989 / NBRC 15051 / NCIMB 9469 / D465), this protein is Ribosomal protein uS12 methylthiotransferase RimO.